Here is a 450-residue protein sequence, read N- to C-terminus: uncharacterized protein (450 aa).

A run of 12 helical transmembrane segments spans residues 10 to 30 (IIVL…LVIA), 53 to 73 (LGGG…AIAI), 95 to 115 (TAGN…LFAI), 120 to 140 (LLPV…SIFN), 148 to 168 (AVAC…PVGF), 199 to 219 (LAML…IFIT), 242 to 262 (IANI…ATFA), 267 to 287 (TSST…CGIF), 302 to 322 (LMAM…VINA), 343 to 363 (IAAL…GSSF), 378 to 398 (LSFG…AALG), and 428 to 448 (VVPT…IAAM).

The protein localises to the cell membrane. This is an uncharacterized protein from Haemophilus influenzae (strain ATCC 51907 / DSM 11121 / KW20 / Rd).